The primary structure comprises 103 residues: Stefin-2 (103 aa).

A Secondary area of contact motif is present at residues 52-56 (QVVQG).

This sequence belongs to the cystatin family.

It localises to the cytoplasm. Functionally, this is an intracellular thiol proteinase inhibitor. The chain is Stefin-2 (Stfa2) from Mus musculus (Mouse).